The following is a 675-amino-acid chain: Potassium-transporting ATPase ATP-binding subunit 2 (675 aa).

A run of 4 helical transmembrane segments spans residues 34 to 54, 65 to 85, 216 to 236, and 245 to 265; these read IMFVVEVGMLLTLILICFPDI, LITIFIILLITILFANFSEAF, IALFTLLTTLTIIFLVVIVTL, and LILPIAMLIALTVCLIPTTIG. The active-site 4-aspartylphosphate intermediate is the Asp304. Residues Asp341, Glu345, 372–379, and Lys390 contribute to the ATP site; that span reads FTAETRMS. Residues Asp513 and Asp517 each contribute to the Mg(2+) site. A run of 3 helical transmembrane segments spans residues 569–591, 611–631, and 644–664; these read ALTTFSLANDVAKYFAILPALMM, AIISALIFNALIIVALIPIAM, and IFINNMLIYGLGGLIVPFLGI.

It belongs to the cation transport ATPase (P-type) (TC 3.A.3) family. Type IA subfamily. The system is composed of three essential subunits: KdpA, KdpB and KdpC.

The protein localises to the cell membrane. It catalyses the reaction K(+)(out) + ATP + H2O = K(+)(in) + ADP + phosphate + H(+). Part of the high-affinity ATP-driven potassium transport (or Kdp) system, which catalyzes the hydrolysis of ATP coupled with the electrogenic transport of potassium into the cytoplasm. This subunit is responsible for energy coupling to the transport system and for the release of the potassium ions to the cytoplasm. The sequence is that of Potassium-transporting ATPase ATP-binding subunit 2 from Staphylococcus aureus (strain MRSA252).